Reading from the N-terminus, the 271-residue chain is Ribosomal RNA small subunit methyltransferase A (271 aa).

His-11, Leu-13, Gly-38, Glu-58, Asp-86, and Asn-101 together coordinate S-adenosyl-L-methionine.

Belongs to the class I-like SAM-binding methyltransferase superfamily. rRNA adenine N(6)-methyltransferase family. RsmA subfamily.

The protein resides in the cytoplasm. The catalysed reaction is adenosine(1518)/adenosine(1519) in 16S rRNA + 4 S-adenosyl-L-methionine = N(6)-dimethyladenosine(1518)/N(6)-dimethyladenosine(1519) in 16S rRNA + 4 S-adenosyl-L-homocysteine + 4 H(+). Specifically dimethylates two adjacent adenosines (A1518 and A1519) in the loop of a conserved hairpin near the 3'-end of 16S rRNA in the 30S particle. May play a critical role in biogenesis of 30S subunits. This is Ribosomal RNA small subunit methyltransferase A from Helicobacter pylori (strain G27).